A 408-amino-acid chain; its full sequence is Histidine--tRNA ligase (408 aa).

Belongs to the class-II aminoacyl-tRNA synthetase family. Homodimer.

Its subcellular location is the cytoplasm. It catalyses the reaction tRNA(His) + L-histidine + ATP = L-histidyl-tRNA(His) + AMP + diphosphate + H(+). This Campylobacter jejuni subsp. jejuni serotype O:6 (strain 81116 / NCTC 11828) protein is Histidine--tRNA ligase.